The primary structure comprises 144 residues: Putative pre-16S rRNA nuclease (144 aa).

The protein belongs to the YqgF nuclease family.

The protein resides in the cytoplasm. In terms of biological role, could be a nuclease involved in processing of the 5'-end of pre-16S rRNA. The polypeptide is Putative pre-16S rRNA nuclease (Mycoplasma mobile (strain ATCC 43663 / 163K / NCTC 11711) (Mesomycoplasma mobile)).